A 79-amino-acid polypeptide reads, in one-letter code: Small ribosomal subunit protein bS18 (79 aa).

The protein belongs to the bacterial ribosomal protein bS18 family. In terms of assembly, part of the 30S ribosomal subunit. Forms a tight heterodimer with protein bS6.

Functionally, binds as a heterodimer with protein bS6 to the central domain of the 16S rRNA, where it helps stabilize the platform of the 30S subunit. The sequence is that of Small ribosomal subunit protein bS18 from Nitrobacter winogradskyi (strain ATCC 25391 / DSM 10237 / CIP 104748 / NCIMB 11846 / Nb-255).